Consider the following 423-residue polypeptide: Glycine amidinotransferase, mitochondrial (423 aa).

Residues 1 to 43 (MLRVRCLRGGSRGAEALHYIGSRLGRTVTGWVQRTFQSTQAAT) constitute a mitochondrion transit peptide. Phosphoserine occurs at positions 46 and 49. Asp170 lines the arginine pocket. Active-site residues include Asp254 and His303. 4 residues coordinate arginine: Asp305, Arg322, Ser354, and Ser355. Residue Lys385 is modified to N6-acetyllysine. Cys407 acts as the Amidino-cysteine intermediate in catalysis.

It belongs to the amidinotransferase family. As to quaternary structure, homodimer. Kidney. Expressed biallelically in placenta.

The protein resides in the mitochondrion inner membrane. The catalysed reaction is L-arginine + glycine = guanidinoacetate + L-ornithine. It catalyses the reaction 4-aminobutanoate + L-arginine = 4-guanidinobutanoate + L-ornithine. It carries out the reaction beta-alanine + L-arginine = 3-guanidinopropanoate + L-ornithine. The enzyme catalyses taurine + L-arginine = taurocyamine + L-ornithine. It participates in amine and polyamine biosynthesis; creatine biosynthesis; creatine from L-arginine and glycine: step 1/2. Transamidinase that catalyzes the transfer of the amidino group of L-arginine onto the amino moiety of acceptor metabolites such as glycine, beta-alanine, gamma-aminobutyric acid (GABA) and taurine yielding the corresponding guanidine derivatives. Catalyzes the rate-limiting step of creatine biosynthesis, namely the transfer of the amidino group from L-arginine to glycine to generate guanidinoacetate, which is then methylated by GAMT to form creatine. Provides creatine as a source for ATP generation in tissues with high energy demands, in particular skeletal muscle, heart and brain. The polypeptide is Glycine amidinotransferase, mitochondrial (GATM) (Sus scrofa (Pig)).